A 476-amino-acid chain; its full sequence is Thyroid receptor-interacting protein 6 (476 aa).

Residues Met-1–Pro-12 show a composition bias toward pro residues. 2 disordered regions span residues Met-1–Leu-93 and Asn-108–Glu-253. Arg-25 is modified (asymmetric dimethylarginine; alternate). The residue at position 25 (Arg-25) is an Omega-N-methylarginine; alternate. Residue Tyr-55 is modified to Phosphotyrosine; by SRC. At Ser-92 the chain carries Phosphoserine. Arg-111 carries the omega-N-methylarginine modification. Ser-142 carries the phosphoserine modification. The span at Pro-152–Ala-167 shows a compositional bias: low complexity. 2 positions are modified to omega-N-methylarginine: Arg-179 and Arg-186. At Ser-189 the chain carries Phosphoserine. An omega-N-methylarginine mark is found at Arg-205, Arg-236, and Arg-238. Ser-249 carries the phosphoserine modification. LIM zinc-binding domains follow at residues Cys-279–Gly-316, Cys-339–Arg-398, and Cys-399–Glu-467. The segment at Ser-469–Cys-476 is interaction with MAGI1 and PTPN13.

The protein belongs to the zyxin/ajuba family. As to quaternary structure, specifically interacts with the ligand binding domain of the thyroid receptor (TR) in the presence of thyroid hormone. Interacts (via the third LIM domain and C-terminus) with PTPN13 (via the second PDZ domain). Interacts (via the second LIM domain or via the third LIM domain plus C-terminus) with PDLIM4 (via PDZ domain). Found in a complex with PTPN13 and PDLIM4. Interacts with SVIL isoform 2. Interacts with LPAR2 but not other LPA receptors. Interacts with PRKAA2. Interacts with MAGI1. Interacts with SCRIB. In case of infection, interacts with S.typhimurium protein sseI. Phosphorylation at Tyr-55 by SRC is required for enhancement of lysophosphatidic acid-induced cell migration. Tyr-55 is dephosphorylated by PTPN13. As to expression, abundantly expressed in kidney, liver and lung. Lower levels in heart, placenta and pancreas. Expressed in colonic epithelial cells. Up-regulated in colonic tumors.

It localises to the cytoplasm. The protein resides in the cytoskeleton. It is found in the cell junction. The protein localises to the focal adhesion. Its subcellular location is the nucleus. Functionally, relays signals from the cell surface to the nucleus to weaken adherens junction and promote actin cytoskeleton reorganization and cell invasiveness. Involved in lysophosphatidic acid-induced cell adhesion and migration. Acts as a transcriptional coactivator for NF-kappa-B and JUN, and mediates the transrepression of these transcription factors induced by glucocorticoid receptor. This chain is Thyroid receptor-interacting protein 6 (TRIP6), found in Homo sapiens (Human).